Here is a 153-residue protein sequence, read N- to C-terminus: Histone H2B.3 (153 aa).

Basic and acidic residues-rich tracts occupy residues 1–28 (MAPKAEKKPAAKKPAEEEPAAEKAEKAP) and 36–53 (EKRLPAGKAEKGSGEGRK). The interval 1-61 (MAPKAEKKPA…RKAGRKKAKK (61 aa)) is disordered. N6-acetyllysine occurs at positions 7 and 37. K149 participates in a covalent cross-link: Glycyl lysine isopeptide (Lys-Gly) (interchain with G-Cter in ubiquitin).

This sequence belongs to the histone H2B family. As to quaternary structure, the nucleosome is a histone octamer containing two molecules each of H2A, H2B, H3 and H4 assembled in one H3-H4 heterotetramer and two H2A-H2B heterodimers. The octamer wraps approximately 147 bp of DNA. In terms of processing, can be acetylated to form H2BK6ac and H2BK33ac. Monoubiquitinated by BRE1 to form H2BK143ub1 and deubiquitinated by UBP26. Required for heterochromatic histone H3 di- and trimethylation at H3K4me. May give a specific tag for epigenetic transcriptional activation.

It is found in the nucleus. Its subcellular location is the chromosome. Its function is as follows. Core component of nucleosome. Nucleosomes wrap and compact DNA into chromatin, limiting DNA accessibility to the cellular machineries which require DNA as a template. Histones thereby play a central role in transcription regulation, DNA repair, DNA replication and chromosomal stability. DNA accessibility is regulated via a complex set of post-translational modifications of histones, also called histone code, and nucleosome remodeling. This is Histone H2B.3 (H2B.3) from Oryza sativa subsp. japonica (Rice).